The sequence spans 216 residues: Pyridoxine/pyridoxamine 5'-phosphate oxidase (216 aa).

FMN-binding positions include 65–70 (RMVLLK), 80–81 (YT), R86, K87, and Q109. Residue K70 participates in substrate binding. Residues Y127, R131, and S135 each coordinate substrate. FMN-binding positions include 144–145 (QS) and W189. 195–197 (RLH) provides a ligand contact to substrate. R199 is an FMN binding site.

This sequence belongs to the pyridoxamine 5'-phosphate oxidase family. As to quaternary structure, homodimer. The cofactor is FMN.

The enzyme catalyses pyridoxamine 5'-phosphate + O2 + H2O = pyridoxal 5'-phosphate + H2O2 + NH4(+). It carries out the reaction pyridoxine 5'-phosphate + O2 = pyridoxal 5'-phosphate + H2O2. It functions in the pathway cofactor metabolism; pyridoxal 5'-phosphate salvage; pyridoxal 5'-phosphate from pyridoxamine 5'-phosphate: step 1/1. The protein operates within cofactor metabolism; pyridoxal 5'-phosphate salvage; pyridoxal 5'-phosphate from pyridoxine 5'-phosphate: step 1/1. Functionally, catalyzes the oxidation of either pyridoxine 5'-phosphate (PNP) or pyridoxamine 5'-phosphate (PMP) into pyridoxal 5'-phosphate (PLP). The sequence is that of Pyridoxine/pyridoxamine 5'-phosphate oxidase from Sphingopyxis alaskensis (strain DSM 13593 / LMG 18877 / RB2256) (Sphingomonas alaskensis).